The chain runs to 589 residues: Cytoplasmic polyadenylation element-binding protein 2 (589 aa).

2 disordered regions span residues 1-103 (MPPP…QAAA) and 118-140 (PLLK…SMSW). Residues 24 to 33 (FFPSFSPVSP) are compositionally biased toward low complexity. Gly residues predominate over residues 44 to 53 (SGGGGGGFGG). A compositionally biased stretch (pro residues) spans 60-81 (VPPPPPPAMNIPQQQPPPPAAP). 2 stretches are compositionally biased toward low complexity: residues 82-103 (QQPQ…QAAA) and 130-140 (SSGWGTGSMSW). At Ser89 the chain carries Phosphoserine. 2 RRM domains span residues 332–423 (RKVF…PWNL) and 440–522 (KTIF…PYVL).

This sequence belongs to the RRM CPEB family. As to quaternary structure, interacts with TENT2/GLD2.

Its subcellular location is the cytoplasm. In terms of biological role, may play a role in translational regulation of stored mRNAs in transcriptionally inactive haploid spermatids. Binds to poly(U) RNA oligomers. Required for cell cycle progression, specifically for the transition from metaphase to anaphase. This Homo sapiens (Human) protein is Cytoplasmic polyadenylation element-binding protein 2 (CPEB2).